The sequence spans 357 residues: Naringenin,2-oxoglutarate 3-dioxygenase (357 aa).

In terms of domain architecture, Fe2OG dioxygenase spans 189-293 (CVDMDQKIVV…RLSIATFQNP (105 aa)). 3 residues coordinate Fe cation: histidine 216, aspartate 218, and histidine 274. Position 284 (arginine 284) interacts with 2-oxoglutarate.

It belongs to the iron/ascorbate-dependent oxidoreductase family. Requires Fe(2+) as cofactor. L-ascorbate is required as a cofactor.

The enzyme catalyses a (2S)-flavan-4-one + 2-oxoglutarate + O2 = a (2R,3R)-dihydroflavonol + succinate + CO2. Its pathway is secondary metabolite biosynthesis; flavonoid biosynthesis. In terms of biological role, catalyzes the 3-beta-hydroxylation of 2S-flavanones to 2R,3R-dihydroflavonols which are intermediates in the biosynthesis of flavonols, anthocyanidins, catechins and proanthocyanidins in plants. This is Naringenin,2-oxoglutarate 3-dioxygenase (FHT) from Matthiola incana (Common stock).